The primary structure comprises 612 residues: uncharacterized protein (612 aa).

The zn(2)-C6 fungal-type DNA-binding region spans 6–32; it reads CLYCRRRKIKCDKNRPCHNCFVAKREC.

It localises to the cytoplasm. It is found in the nucleus. This is an uncharacterized protein from Schizosaccharomyces pombe (strain 972 / ATCC 24843) (Fission yeast).